A 131-amino-acid chain; its full sequence is Translation initiation factor 5A (131 aa).

At Lys37 the chain carries Hypusine.

The protein belongs to the eIF-5A family.

It localises to the cytoplasm. In terms of biological role, functions by promoting the formation of the first peptide bond. This Methanococcus maripaludis (strain DSM 14266 / JCM 13030 / NBRC 101832 / S2 / LL) protein is Translation initiation factor 5A.